The chain runs to 326 residues: Interleukin-1-binding protein (326 aa).

The N-terminal stretch at 1-18 (MSILPVIFLSIFFYSSFV) is a signal peptide. 3 Ig-like domains span residues 24–115 (PECI…LNLT), 122–212 (SNID…RIVK), and 221–322 (PSTM…KTVT). C48 and C99 form a disulfide bridge. N-linked (GlcNAc...) asparagine; by host glycans are attached at residues N80, N103, and N113. An intrachain disulfide couples C143 to C194. N-linked (GlcNAc...) asparagine; by host glycosylation is found at N206 and N237. C242 and C309 are joined by a disulfide.

This sequence belongs to the interleukin-1 receptor family. In terms of assembly, interacts with mouse Il1b.

Its subcellular location is the secreted. Functionally, may reduce the host inflammatory response by interacting with inteleukin-1 beta (Il1b) and thus decreasing the association between IL1B and its cellular receptor. The chain is Interleukin-1-binding protein (OPG201) from Vaccinia virus (strain Ankara) (VACV).